The primary structure comprises 388 residues: D-alanyl-D-alanine carboxypeptidase DacD (388 aa).

An N-terminal signal peptide occupies residues 1-21; sequence MKRRLIIAASLFVFNLSSGFA. Ser63 serves as the catalytic Acyl-ester intermediate. Lys66 (proton acceptor) is an active-site residue. Ser129 is a catalytic residue. Lys232 contributes to the substrate binding site.

The protein belongs to the peptidase S11 family.

It is found in the cell inner membrane. It catalyses the reaction Preferential cleavage: (Ac)2-L-Lys-D-Ala-|-D-Ala. Also transpeptidation of peptidyl-alanyl moieties that are N-acyl substituents of D-alanine.. It participates in cell wall biogenesis; peptidoglycan biosynthesis. Functionally, removes C-terminal D-alanyl residues from sugar-peptide cell wall precursors. The polypeptide is D-alanyl-D-alanine carboxypeptidase DacD (dacD) (Escherichia coli (strain K12)).